Here is a 479-residue protein sequence, read N- to C-terminus: Chromosomal replication initiator protein DnaA (479 aa).

The segment at 1–94 (MKGGTMVENA…QTLWRTERED (94 aa)) is domain I, interacts with DnaA modulators. The segment at 94-142 (DIKGVELQVKRGLPEVSMGDAEDGEDGSGEGHELATQAAAPESRSDLAV) is domain II. Residues 106 to 137 (LPEVSMGDAEDGEDGSGEGHELATQAAAPESR) are disordered. The interval 143 to 359 (PLDPRFTFDT…GALNRLIAHA (217 aa)) is domain III, AAA+ region. Residues G188, G190, K191, and T192 each coordinate ATP. Residues 360–479 (DLVGRPVTLD…VELLRRMLEG (120 aa)) are domain IV, binds dsDNA.

Belongs to the DnaA family. As to quaternary structure, oligomerizes as a right-handed, spiral filament on DNA at oriC.

It is found in the cytoplasm. Functionally, plays an essential role in the initiation and regulation of chromosomal replication. ATP-DnaA binds to the origin of replication (oriC) to initiate formation of the DNA replication initiation complex once per cell cycle. Binds the DnaA box (a 9 base pair repeat at the origin) and separates the double-stranded (ds)DNA. Forms a right-handed helical filament on oriC DNA; dsDNA binds to the exterior of the filament while single-stranded (ss)DNA is stabiized in the filament's interior. The ATP-DnaA-oriC complex binds and stabilizes one strand of the AT-rich DNA unwinding element (DUE), permitting loading of DNA polymerase. After initiation quickly degrades to an ADP-DnaA complex that is not apt for DNA replication. Binds acidic phospholipids. The sequence is that of Chromosomal replication initiator protein DnaA from Gluconobacter oxydans (strain 621H) (Gluconobacter suboxydans).